We begin with the raw amino-acid sequence, 499 residues long: Salviol synthase (499 aa).

A helical membrane pass occupies residues 4–24 (HIPSLVLCISFFIFFKIVSKL). Cysteine 436 is a binding site for heme.

It belongs to the cytochrome P450 family. Heme is required as a cofactor. Expressed in leaf glandular trichomes.

The protein resides in the membrane. The catalysed reaction is ferruginol + reduced [NADPH--hemoprotein reductase] + O2 = salviol + oxidized [NADPH--hemoprotein reductase] + H2O + H(+). It functions in the pathway secondary metabolite biosynthesis; terpenoid biosynthesis. In terms of biological role, monooxygenase involved in the biosynthesis of labdane-related diterpenes natural products. Catalyzes the oxidation of ferruginol to produce salviol. Salviol is an intermediate in the biosynthesis of carnosate, a potent antioxidant. In Salvia pomifera (Apple sage), this protein is Salviol synthase.